The chain runs to 321 residues: MPVLMPSADVPTIDISPQLFGTDPTPRRTSRGRSTRPARGSGFFYASHHGIDVRRLQTWSNESTTMTDQRSTTWRSTRYNENNSHVRNGYYMARPGRETVESWCYLNPSFGEDHPMMKAGTPMHEVNVWPDEERHPDFGSFGEQYHREVSASRRCCCGASRWRRQAGESSSNEVTEEDTLSAVSMIRYPYLDPYPEAAIKTGPDGTRLSFEDHLDVSMITVLSKTEVQNLQVETVDGWQSLPTSGENFLINCGTYLGYLTNDYFPAPNHRVKYVNAERLSLPFFLHAGQNSVMKPFTRRTGDRKLNPAVTYGEYLQEGFTR.

The disordered stretch occupies residues 1–42; that stretch reads MPVLMPSADVPTIDISPQLFGTDPTPRRTSRGRSTRPARGSG. The isopenicillin N site is built by arginine 87, tyrosine 91, and tyrosine 188. N-[(5S)-5-amino-5-carboxypentanoyl]-L-cysteinyl-D-valine contacts are provided by arginine 87, tyrosine 91, tyrosine 188, histidine 213, and aspartate 215. In terms of domain architecture, Fe2OG dioxygenase spans 179–287; it reads TLSAVSMIRY…RLSLPFFLHA (109 aa). Histidine 213, aspartate 215, and histidine 269 together coordinate Fe(2+). Residue arginine 278 coordinates 2-oxoglutarate. Isopenicillin N is bound at residue serine 280. Serine 280 serves as a coordination point for N-[(5S)-5-amino-5-carboxypentanoyl]-L-cysteinyl-D-valine.

It belongs to the iron/ascorbate-dependent oxidoreductase family. It depends on Fe cation as a cofactor. L-ascorbate is required as a cofactor.

The enzyme catalyses N-[(5S)-5-amino-5-carboxypentanoyl]-L-cysteinyl-D-valine + O2 = isopenicillin N + 2 H2O. Its pathway is antibiotic biosynthesis; penicillin G biosynthesis; penicillin G from L-alpha-aminoadipate and L-cysteine and L-valine: step 2/3. In terms of biological role, removes, in the presence of oxygen, 4 hydrogen atoms from delta-L-(alpha-aminoadipyl)-L-cysteinyl-D-valine (ACV) to form the azetidinone and thiazolidine rings of isopenicillin. This chain is Isopenicillin N synthase (pcbC), found in Streptantibioticus cattleyicolor (Streptomyces cattleya).